A 180-amino-acid chain; its full sequence is NADH-quinone oxidoreductase subunit I (180 aa).

4Fe-4S ferredoxin-type domains are found at residues Leu50–Ala80 and Glu90–Asp119. Residues Cys60, Cys63, Cys66, Cys70, Cys99, Cys102, Cys105, and Cys109 each coordinate [4Fe-4S] cluster.

The protein belongs to the complex I 23 kDa subunit family. NDH-1 is composed of 14 different subunits. Subunits NuoA, H, J, K, L, M, N constitute the membrane sector of the complex. The cofactor is [4Fe-4S] cluster.

The protein resides in the cell inner membrane. The enzyme catalyses a quinone + NADH + 5 H(+)(in) = a quinol + NAD(+) + 4 H(+)(out). NDH-1 shuttles electrons from NADH, via FMN and iron-sulfur (Fe-S) centers, to quinones in the respiratory chain. The immediate electron acceptor for the enzyme in this species is believed to be ubiquinone. Couples the redox reaction to proton translocation (for every two electrons transferred, four hydrogen ions are translocated across the cytoplasmic membrane), and thus conserves the redox energy in a proton gradient. The polypeptide is NADH-quinone oxidoreductase subunit I (Acinetobacter baumannii (strain ACICU)).